The sequence spans 30 residues: Snaclec coagulation factor IX/factor X-binding protein subunit A (30 aa).

The C-type lectin domain occupies Asp-1–Cys-30. Cysteines 2 and 13 form a disulfide.

This sequence belongs to the snaclec family. As to quaternary structure, heterodimer of subunits A and B; disulfide-linked. Expressed by the venom gland.

It localises to the secreted. Its function is as follows. Anticoagulant protein which binds to the gamma-carboxyglutamic acid-domain regions of factors IX (F9) and factor X (F10) in the presence of calcium with a 1 to 1 stoichiometry. The protein is Snaclec coagulation factor IX/factor X-binding protein subunit A of Bothrops jararaca (Jararaca).